The following is a 143-amino-acid chain: Ribosome maturation factor RimP (143 aa).

The protein belongs to the RimP family.

It is found in the cytoplasm. Required for maturation of 30S ribosomal subunits. This is Ribosome maturation factor RimP from Borrelia turicatae (strain 91E135).